We begin with the raw amino-acid sequence, 118 residues long: uncharacterized protein (118 aa).

3 helical membrane-spanning segments follow: residues 22 to 44 (IIAS…FSIA), 54 to 71 (LSPL…PVLR), and 78 to 99 (PILS…VEWL).

The protein resides in the cell membrane. This is an uncharacterized protein from Archaeoglobus fulgidus (strain ATCC 49558 / DSM 4304 / JCM 9628 / NBRC 100126 / VC-16).